Consider the following 334-residue polypeptide: Ketol-acid reductoisomerase (NADP(+)) (334 aa).

A KARI N-terminal Rossmann domain is found at 2 to 182 (PKMYYEKDTD…GGARAGVLET (181 aa)). NADP(+) contacts are provided by residues 25–28 (YGSQ), Ser51, Ser53, and 83–86 (DEKQ). The active site involves His108. NADP(+) is bound at residue Gly134. The region spanning 183-328 (TFKDETETDL…KELRGMMSWI (146 aa)) is the KARI C-terminal knotted domain. Residues Asp191, Glu195, Glu227, and Glu231 each coordinate Mg(2+). Ser252 contributes to the substrate binding site.

It belongs to the ketol-acid reductoisomerase family. It depends on Mg(2+) as a cofactor.

It carries out the reaction (2R)-2,3-dihydroxy-3-methylbutanoate + NADP(+) = (2S)-2-acetolactate + NADPH + H(+). The catalysed reaction is (2R,3R)-2,3-dihydroxy-3-methylpentanoate + NADP(+) = (S)-2-ethyl-2-hydroxy-3-oxobutanoate + NADPH + H(+). It participates in amino-acid biosynthesis; L-isoleucine biosynthesis; L-isoleucine from 2-oxobutanoate: step 2/4. The protein operates within amino-acid biosynthesis; L-valine biosynthesis; L-valine from pyruvate: step 2/4. Its function is as follows. Involved in the biosynthesis of branched-chain amino acids (BCAA). Catalyzes an alkyl-migration followed by a ketol-acid reduction of (S)-2-acetolactate (S2AL) to yield (R)-2,3-dihydroxy-isovalerate. In the isomerase reaction, S2AL is rearranged via a Mg-dependent methyl migration to produce 3-hydroxy-3-methyl-2-ketobutyrate (HMKB). In the reductase reaction, this 2-ketoacid undergoes a metal-dependent reduction by NADPH to yield (R)-2,3-dihydroxy-isovalerate. The protein is Ketol-acid reductoisomerase (NADP(+)) of Clostridium beijerinckii (strain ATCC 51743 / NCIMB 8052) (Clostridium acetobutylicum).